The primary structure comprises 309 residues: Methionyl-tRNA formyltransferase (309 aa).

107–110 (SLLP) is a binding site for (6S)-5,6,7,8-tetrahydrofolate.

Belongs to the Fmt family.

The enzyme catalyses L-methionyl-tRNA(fMet) + (6R)-10-formyltetrahydrofolate = N-formyl-L-methionyl-tRNA(fMet) + (6S)-5,6,7,8-tetrahydrofolate + H(+). Attaches a formyl group to the free amino group of methionyl-tRNA(fMet). The formyl group appears to play a dual role in the initiator identity of N-formylmethionyl-tRNA by promoting its recognition by IF2 and preventing the misappropriation of this tRNA by the elongation apparatus. The sequence is that of Methionyl-tRNA formyltransferase from Borrelia duttonii (strain Ly).